Here is a 244-residue protein sequence, read N- to C-terminus: MTVVEIKSQDQFTQLTTTNAANKLIVLYFKAQWADPCKTMSQVLEAVSEKVRQEDVRFLSIDADEHPEISDLFEIAAVPYFVFIQNGTIVKEISAADPKEFVKSLEILSNASASLANNAKGPKSTSDEESSGSSDDEEDETEEEINARLVKLVQAAPVMLFMKGSPSEPKCGFSRQLVGILREHQIRFGFFDILRDENVRQSLKKFSDWPTFPQLYINGEFQGGLDIIKESIEEDPEYFQHALQ.

The Thioredoxin domain maps to 3 to 110 (VVEIKSQDQF…FVKSLEILSN (108 aa)). Positions 116–143 (ANNAKGPKSTSDEESSGSSDDEEDETEE) are disordered. Over residues 127-143 (DEESSGSSDDEEDETEE) the composition is skewed to acidic residues. One can recognise a Glutaredoxin domain in the interval 146 to 244 (NARLVKLVQA…DPEYFQHALQ (99 aa)). A glutathione-binding site is contributed by K163. [2Fe-2S] cluster is bound at residue C171. Glutathione contacts are provided by residues R200, F212, and 225 to 226 (LD).

It belongs to the glutaredoxin family. Monothiol subfamily. Homodimer. Heterodimer with FRA2.

Monothiol glutaredoxin involved in the biogenesis of iron-sulfur clusters. Binds one iron-sulfur cluster per dimer. The iron-sulfur cluster is bound between subunits, and is complexed by a bound glutathione and a cysteine residue from each subunit. This Saccharomyces cerevisiae (strain ATCC 204508 / S288c) (Baker's yeast) protein is Monothiol glutaredoxin-4 (GRX4).